The chain runs to 101 residues: Integration host factor subunit beta (101 aa).

The disordered stretch occupies residues 57 to 76 (PARAGRNPRTGEHVPVDQKS).

Belongs to the bacterial histone-like protein family. In terms of assembly, heterodimer of an alpha and a beta chain.

Its function is as follows. This protein is one of the two subunits of integration host factor, a specific DNA-binding protein that functions in genetic recombination as well as in transcriptional and translational control. This chain is Integration host factor subunit beta, found in Nitrobacter winogradskyi (strain ATCC 25391 / DSM 10237 / CIP 104748 / NCIMB 11846 / Nb-255).